A 276-amino-acid chain; its full sequence is Tryptophan synthase alpha chain (276 aa).

Residues Glu49 and Asp60 each act as proton acceptor in the active site.

This sequence belongs to the TrpA family. Tetramer of two alpha and two beta chains.

The enzyme catalyses (1S,2R)-1-C-(indol-3-yl)glycerol 3-phosphate + L-serine = D-glyceraldehyde 3-phosphate + L-tryptophan + H2O. Its pathway is amino-acid biosynthesis; L-tryptophan biosynthesis; L-tryptophan from chorismate: step 5/5. The alpha subunit is responsible for the aldol cleavage of indoleglycerol phosphate to indole and glyceraldehyde 3-phosphate. This is Tryptophan synthase alpha chain from Corynebacterium aurimucosum (strain ATCC 700975 / DSM 44827 / CIP 107346 / CN-1) (Corynebacterium nigricans).